The following is a 200-amino-acid chain: Charged multivesicular body protein 6-B (200 aa).

A lipid anchor (N-myristoyl glycine) is attached at Gly-2. Residues 9–102 (RRSRVTEQDK…FAQIEMKVIE (94 aa)) adopt a coiled-coil conformation. The disordered stretch occupies residues 165–200 (QEDLELPEAPSEPLSDTVPEKQAVKNRPKPQLVAAS). Positions 168 to 179 (LELPEAPSEPLS) match the Type-2 MIT-interacting motif motif.

It belongs to the SNF7 family. As to quaternary structure, probable core component of the endosomal sorting required for transport complex III (ESCRT-III). ESCRT-III components are thought to multimerize to form a flat lattice on the perimeter membrane of the endosome.

It is found in the endomembrane system. The protein localises to the late endosome membrane. Probable core component of the endosomal sorting required for transport complex III (ESCRT-III) which is involved in multivesicular bodies (MVBs) formation and sorting of endosomal cargo proteins into MVBs. MVBs contain intraluminal vesicles (ILVs) that are generated by invagination and scission from the limiting membrane of the endosome and mostly are delivered to lysosomes enabling degradation of membrane proteins, such as stimulated growth factor receptors, lysosomal enzymes and lipids. In the ESCRT-III complex, it probably serves as an acceptor for the ESCRT-II complex on endosomal membranes. The protein is Charged multivesicular body protein 6-B (chmp6-b) of Xenopus laevis (African clawed frog).